A 585-amino-acid polypeptide reads, in one-letter code: Trehalase (585 aa).

The signal sequence occupies residues 1–32 (MAKTTPMAKPSVGLLTLQVLVFCALTGSLASA). Residues Arg184 and 191–192 (WD) contribute to the substrate site. Asn207 carries an N-linked (GlcNAc...) asparagine glycan. Substrate is bound by residues Asn228, 237–239 (RSQ), 302–304 (RPE), and Gly336. The active-site Proton donor/acceptor is the Asp338. Asn348 is a glycosylation site (N-linked (GlcNAc...) asparagine). Glu535 functions as the Proton donor/acceptor in the catalytic mechanism. A substrate-binding site is contributed by Glu550.

This sequence belongs to the glycosyl hydrolase 37 family. As to expression, expressed by the venom gland.

It is found in the secreted. It carries out the reaction alpha,alpha-trehalose + H2O = alpha-D-glucose + beta-D-glucose. The polypeptide is Trehalase (tre1) (Pimpla hypochondriaca (Parasitoid wasp)).